Consider the following 859-residue polypeptide: MELQTKSPTTQNDFSQHTPMMRQYLRIKAEYPDLLVFYRMGDFYELFYDDAKKAAKLLNITLTARGQSAGHAIPMAGVPYHAVENYLTKLVRLGESVVICEQIGDPATSKGPVAREVTRIITPGTVSDEALLDEHRDNTLMVIHQEKDRFGIATLDITSGRFLIQEIISENALFAEIERIRPAELLISEENSVHPLKADSIKRRPPWEFDHATALTLLCQQFQTKSLDGFGITHLPLAITAAGCLLQYVNYTQKSALPHIHSIQAEQNEEALFIDANTRRNLELITNLQGEEVHSLAWLLDHTATPMGSRLLRRWINRPLRDQILLQQRQNAVSTLLEKRNYSEIYENLRHIGDLERIVARIALRSARPRDLMQLRQALGVLPTLHQQLTNLPLNKQLQEIKNNLGLFDELFRLLKKAIIENPPIVIRDGGVIADGYDAPLDELRNMSTNSHQFLIDLEQQERERTKINTVKVGYNRIHGYYIEISRAQAKQAPTEYIRRQTLKNVERYITPELKIFEDKVLSSRSRALAREKELYEQLLDTLIEKLIPLQQCASAIANLDVLNTLAERADTLNFNAPQFCDYPIIKIEAGRHPIVENVMTDPFMPNDTHLDEKRRMLIITGPNMGGKSTYMRQTALITLLAYIGSFVPAKNAQLGPIDRIFTRIGAADDLASGRSTFMVEMTETAAILHNATEESLVLMDEVGRGTSTFDGLSLAYACASYLATKLKAFALFATHYFELTALASTLQAVKNVHLDAVEHEEKIIFLHALREGPANKSYGLQVAQLAGIPRSVIQHARQKLEELENPVISETQQPQQNELFLPIENPVLTQLDKLNPDNLTPKQALDILYQLIQLRQQK.

Residue 622 to 629 coordinates ATP; it reads GPNMGGKS.

It belongs to the DNA mismatch repair MutS family.

In terms of biological role, this protein is involved in the repair of mismatches in DNA. It is possible that it carries out the mismatch recognition step. This protein has a weak ATPase activity. The protein is DNA mismatch repair protein MutS of Coxiella burnetii (strain RSA 493 / Nine Mile phase I).